Consider the following 957-residue polypeptide: SLIT and NTRK-like protein 5 (957 aa).

Residues 1-40 (MHVCCPPVTLEQDLHRKMHSWMLQTLAFAVTSLVLSCAET) form the signal peptide. At 41 to 664 (IDYYGEICDN…GTGASSVPLS (624 aa)) the chain is on the extracellular side. 6 LRR repeats span residues 82–103 (PIYH…EFVN), 106–127 (GASI…AFHG), 130–151 (GLRR…TFLG), 154–175 (NLEY…AFGK), 178–199 (MLQV…LFRF), and 201–222 (PLTH…GLLQ). N-linked (GlcNAc...) asparagine glycosylation is present at Asn103. Residues 235–286 (NPWNCSCELISLKDWLDSISYSALVGDVVCETPFRLHGRDLDEVSKQELCPR) enclose the LRRCT 1 domain. The disordered stretch occupies residues 317 to 358 (ATSSSAVYKPPLKPPKGTRQPNKPRVRPTSRQPSKDLGYSNY). Positions 365–407 (QTKSPVPLECPTACTCNLQISDLGLNVNCQERKIESIAELQPK) constitute an LRRNT domain. LRR repeat units lie at residues 410–431 (NPKK…DFLE), 434–455 (GLDL…AFGD), 458–479 (NLRR…LFYG), 482–503 (SLQY…TFDP), 506–527 (NLQL…VFSG), and 529–550 (TLLR…GVLD). Positions 563 to 614 (NPWDCTCDVVGMKLWIEQLKVGVLVDEVICKAPKKFAETYMRSIKSELLCPD) constitute an LRRCT 2 domain. The segment covering 623–632 (PTPSSIQVPS) has biased composition (low complexity). Residues 623-642 (PTPSSIQVPSRTNAATPAVR) form a disordered region. Asn644 carries N-linked (GlcNAc...) asparagine glycosylation. Residues 665–685 (VLILSLLLVFIMSVFVAAGLF) traverse the membrane as a helical segment. Over 686–957 (VLVMKRRKKN…LEKQTTFSQF (272 aa)) the chain is Cytoplasmic. The segment at 789–844 (SNHHLQQQPPPPPQQPQQQPPPQMQMQPGEEERRESHHLRSPAYSVSTIEPREDLL) is disordered. Residues 796–811 (QPPPPPQQPQQQPPPQ) show a composition bias toward pro residues.

Belongs to the SLITRK family. As to expression, in the adult, significant expression is detected only in the brain. In the embryo, expressed in the subventricular zone, cortical plate, pyramidal layer of hippocampus, thalamus and hypothalamus.

It localises to the membrane. Its function is as follows. Suppresses neurite outgrowth. The polypeptide is SLIT and NTRK-like protein 5 (Slitrk5) (Mus musculus (Mouse)).